Consider the following 325-residue polypeptide: Mitochondrial citrate transporter C (325 aa).

Solcar repeat units lie at residues 15-105 (ASPA…YKQM), 117-208 (KATF…LKAF), and 221-310 (LPSY…LKGK). Transmembrane regions (helical) follow at residues 21–41 (LIAG…LDTI), 82–102 (GAVL…YESY), 121–141 (LAGL…MEVV), 187–207 (TALR…ELKA), 221–241 (LPSY…PFSN), and 282–303 (FYKG…TFTV).

Belongs to the mitochondrial carrier (TC 2.A.29) family.

It localises to the mitochondrion inner membrane. Its function is as follows. Mitochondrial transporter that does not mediate citrate export from mitochondria to cytoplasm. Its exact function has still to be determined. This is Mitochondrial citrate transporter C from Aspergillus niger (strain ATCC 1015 / CBS 113.46 / FGSC A1144 / LSHB Ac4 / NCTC 3858a / NRRL 328 / USDA 3528.7).